Reading from the N-terminus, the 190-residue chain is Potassium-transporting ATPase KdpC subunit (190 aa).

Residues Thr-10–Gly-30 traverse the membrane as a helical segment.

Belongs to the KdpC family. As to quaternary structure, the system is composed of three essential subunits: KdpA, KdpB and KdpC.

It localises to the cell inner membrane. Functionally, part of the high-affinity ATP-driven potassium transport (or Kdp) system, which catalyzes the hydrolysis of ATP coupled with the electrogenic transport of potassium into the cytoplasm. This subunit acts as a catalytic chaperone that increases the ATP-binding affinity of the ATP-hydrolyzing subunit KdpB by the formation of a transient KdpB/KdpC/ATP ternary complex. The chain is Potassium-transporting ATPase KdpC subunit from Escherichia coli O6:H1 (strain CFT073 / ATCC 700928 / UPEC).